We begin with the raw amino-acid sequence, 792 residues long: Ribosome biogenesis protein BOP1 homolog (792 aa).

The span at 1-11 shows a compositional bias: basic residues; the sequence is MTKKRTVKRKV. Residues 1–167 form a disordered region; the sequence is MTKKRTVKRK…ESDTSDEEDI (167 aa). Acidic residues-rich tracts occupy residues 44-53, 60-72, 82-117, and 157-166; these read EDTTDDEGID, SSED…DEEG, EAEE…ESDA, and EESDTSDEED. WD repeat units lie at residues 453-494, 496-534, 578-620, 623-661, 664-703, 707-746, and 762-792; these read GHTD…RTIE, NDVV…KLLI, THFK…SQIP, KSKG…LIKK, TNSK…KPYQ, LHRN…DLLQ, and RDEF…RLYT.

Belongs to the WD repeat BOP1/ERB1 family.

It localises to the nucleus. It is found in the nucleolus. Its subcellular location is the nucleoplasm. Functionally, required for maturation of ribosomal RNAs and formation of the large ribosomal subunit. This is Ribosome biogenesis protein BOP1 homolog from Drosophila mojavensis (Fruit fly).